Consider the following 278-residue polypeptide: MANFKGHALPGSFFLIVGLWWSVKYPLKYFHHKGLKNNRLSRQQERIEIIEGAVKTLFAIIGILAEQFVPDGPHLHLYHENQWVKLMNWQHSTMYLFFGVSGLMDMITYLYFHIVPLGLDRVVLAMAVFIEGFLFYFHVHNRPPLDQHIHSLLLFGLFGAAVSISLEVILRDNIVLELFRTSLLILQGTWFWQIGFVLFPPFGRPEWDQKDMDNIMFITMCFCWHYLVALCIVAINYSLVYCFLTRVKRRAEGEIIGIQKLKSDHTYQSALLSGSDEE.

7 helical membrane passes run 7-27 (HALP…KYPL), 49-69 (IIEG…EQFV), 95-115 (YLFF…FHIV), 117-137 (LGLD…LFYF), 149-169 (IHSL…LEVI), 183-203 (LLIL…PPFG), and 215-235 (IMFI…IVAI). Phosphoserine occurs at positions 273 and 275.

This sequence belongs to the TMEM45 family.

The protein localises to the endosome membrane. Its subcellular location is the lysosome membrane. The protein resides in the golgi apparatus. It localises to the trans-Golgi network membrane. Its function is as follows. Plays a role in innate immunity. This Mus musculus (Mouse) protein is Transmembrane protein 45B (Tmem45b).